The following is a 278-amino-acid chain: Sulfur carrier protein FdhD (278 aa).

The active-site Cysteine persulfide intermediate is the cysteine 121. A Mo-bis(molybdopterin guanine dinucleotide)-binding site is contributed by 260–265 (FCKPGR).

This sequence belongs to the FdhD family.

It localises to the cytoplasm. Required for formate dehydrogenase (FDH) activity. Acts as a sulfur carrier protein that transfers sulfur from IscS to the molybdenum cofactor prior to its insertion into FDH. This is Sulfur carrier protein FdhD from Salmonella typhi.